A 180-amino-acid polypeptide reads, in one-letter code: ATP-dependent protease subunit HslV (180 aa).

Threonine 8 is an active-site residue. Na(+) is bound by residues glycine 165, aspartate 168, and threonine 171.

It belongs to the peptidase T1B family. HslV subfamily. A double ring-shaped homohexamer of HslV is capped on each side by a ring-shaped HslU homohexamer. The assembly of the HslU/HslV complex is dependent on binding of ATP.

The protein resides in the cytoplasm. It catalyses the reaction ATP-dependent cleavage of peptide bonds with broad specificity.. With respect to regulation, allosterically activated by HslU binding. Its function is as follows. Protease subunit of a proteasome-like degradation complex believed to be a general protein degrading machinery. This chain is ATP-dependent protease subunit HslV, found in Lactiplantibacillus plantarum (strain ATCC BAA-793 / NCIMB 8826 / WCFS1) (Lactobacillus plantarum).